Here is a 448-residue protein sequence, read N- to C-terminus: Ribosomal protein uS12 methylthiotransferase RimO (448 aa).

The MTTase N-terminal domain maps to 16 to 126; the sequence is PKISFVSLGC…VVAAVHEAVP (111 aa). Positions 25, 61, 90, 157, 161, and 164 each coordinate [4Fe-4S] cluster. Residues 143 to 380 enclose the Radical SAM core domain; the sequence is LTPRHYAYLK…METQNGIALR (238 aa). The TRAM domain maps to 383-448; it reads RAKVGKRLPV…EAYDLYGSVA (66 aa).

Belongs to the methylthiotransferase family. RimO subfamily. Requires [4Fe-4S] cluster as cofactor.

Its subcellular location is the cytoplasm. The catalysed reaction is L-aspartate(89)-[ribosomal protein uS12]-hydrogen + (sulfur carrier)-SH + AH2 + 2 S-adenosyl-L-methionine = 3-methylsulfanyl-L-aspartate(89)-[ribosomal protein uS12]-hydrogen + (sulfur carrier)-H + 5'-deoxyadenosine + L-methionine + A + S-adenosyl-L-homocysteine + 2 H(+). Catalyzes the methylthiolation of an aspartic acid residue of ribosomal protein uS12. This Methylobacterium radiotolerans (strain ATCC 27329 / DSM 1819 / JCM 2831 / NBRC 15690 / NCIMB 10815 / 0-1) protein is Ribosomal protein uS12 methylthiotransferase RimO.